The chain runs to 413 residues: Imidazolonepropionase (413 aa).

2 residues coordinate Fe(3+): His-70 and His-72. His-70 and His-72 together coordinate Zn(2+). 4-imidazolone-5-propanoate-binding residues include Arg-79, Tyr-142, and His-175. Tyr-142 contributes to the N-formimidoyl-L-glutamate binding site. Fe(3+) is bound at residue His-240. Residue His-240 coordinates Zn(2+). A 4-imidazolone-5-propanoate-binding site is contributed by Glu-243. Asp-315 contacts Fe(3+). Asp-315 is a binding site for Zn(2+). Asn-317 and Gly-319 together coordinate N-formimidoyl-L-glutamate. Residue Ser-320 coordinates 4-imidazolone-5-propanoate.

This sequence belongs to the metallo-dependent hydrolases superfamily. HutI family. It depends on Zn(2+) as a cofactor. The cofactor is Fe(3+).

It localises to the cytoplasm. The enzyme catalyses 4-imidazolone-5-propanoate + H2O = N-formimidoyl-L-glutamate. The protein operates within amino-acid degradation; L-histidine degradation into L-glutamate; N-formimidoyl-L-glutamate from L-histidine: step 3/3. Catalyzes the hydrolytic cleavage of the carbon-nitrogen bond in imidazolone-5-propanoate to yield N-formimidoyl-L-glutamate. It is the third step in the universal histidine degradation pathway. In Treponema denticola (strain ATCC 35405 / DSM 14222 / CIP 103919 / JCM 8153 / KCTC 15104), this protein is Imidazolonepropionase.